Here is a 68-residue protein sequence, read N- to C-terminus: Antimicrobial peptide UyCT5 (68 aa).

The N-terminal stretch at 1-23 is a signal peptide; the sequence is MKNQFAILLLAVVFLQLISQSDA. Leucine amide is present on Leu36. Residues 40 to 68 constitute a propeptide that is removed on maturation; the sequence is GLKNADRLDELFDGDISDADLDFLRELMR.

The protein belongs to the non-disulfide-bridged peptide (NDBP) superfamily. Short antimicrobial peptide (group 4) family. In terms of tissue distribution, expressed by the venom gland.

The protein resides in the secreted. Its subcellular location is the target cell membrane. Functionally, antimicrobial peptide that inhibits the growth of Gram-positive (S.aureus, MIC=1 uM) and Gram-negative bacteria (E.coli, MIC=15 uM and P.aeruginosa, MIC=2 uM). It also shows 37% of hemolysis when 15 uM are tested (93% at 50 uM). In Urodacus yaschenkoi (Inland robust scorpion), this protein is Antimicrobial peptide UyCT5.